The following is a 723-amino-acid chain: FACT complex subunit Ssrp1 (723 aa).

A Phosphoserine modification is found at Ser443. Disordered regions lie at residues 459–564 (EARE…AFML) and 586–723 (AKKG…EASD). 2 stretches are compositionally biased toward acidic residues: residues 464 to 478 (EEDD…ESTD) and 486 to 507 (NESD…DDSD). The segment covering 531-557 (KKEKKHKEKERTKKPSKKKKDSGKPKR) has biased composition (basic residues). Positions 555-621 (PKRATTAFML…RYHDEMRNYK (67 aa)) form a DNA-binding region, HMG box. Residues 586–621 (AKKGGEMWKELKDKSKWEDAAAKDKQRYHDEMRNYK) are compositionally biased toward basic and acidic residues. Ser628 carries the post-translational modification Phosphoserine. Positions 644–656 (PSPSKKANTSGSG) are enriched in polar residues. A phosphoserine mark is found at Ser664 and Ser668. A compositionally biased stretch (acidic residues) spans 664-676 (SDDDSTSSDDEKD). Position 669 is a phosphothreonine (Thr669). Phosphoserine occurs at positions 670 and 671. Basic and acidic residues predominate over residues 677–692 (NEPAKKKSKPPSDGDA). Acidic residues predominate over residues 702–723 (EPEESEEDSNASDEDEEDEASD).

It belongs to the SSRP1 family. As to quaternary structure, component of the FACT complex, a stable heterodimer of dre4/spt16 and Ssrp. Interacts with CHD1 and TRL/GAGA. As to expression, expressed at highest levels in nurse cells of the ovary.

The protein localises to the nucleus. Its subcellular location is the chromosome. It localises to the nucleolus. Functionally, component of the FACT complex, a general chromatin factor that acts to reorganize nucleosomes. The FACT complex is involved in multiple processes that require DNA as a template such as mRNA elongation, DNA replication and DNA repair. During transcription elongation the FACT complex acts as a histone chaperone that both destabilizes and restores nucleosomal structure. It facilitates the passage of RNA polymerase II and transcription by promoting the dissociation of one histone H2A-H2B dimer from the nucleosome, then subsequently promotes the reestablishment of the nucleosome following the passage of RNA polymerase II. Binds specifically to single-stranded DNA and RNA with highest affinity for nucleotides G and U. The FACT complex is required for expression of Hox genes. The chain is FACT complex subunit Ssrp1 (Ssrp) from Drosophila melanogaster (Fruit fly).